The primary structure comprises 636 residues: Chitin synthase VI (636 aa).

The next 4 helical transmembrane spans lie at leucine 23–isoleucine 43, threonine 374–alanine 394, leucine 399–glycine 419, and isoleucine 427–tyrosine 447. The segment at glutamine 595 to phenylalanine 636 is disordered. A compositionally biased stretch (polar residues) spans proline 607–serine 627.

It belongs to the chitin synthase family. Class VI subfamily. In terms of tissue distribution, moderately expressed during appressorium formation.

Its subcellular location is the cell membrane. The enzyme catalyses [(1-&gt;4)-N-acetyl-beta-D-glucosaminyl](n) + UDP-N-acetyl-alpha-D-glucosamine = [(1-&gt;4)-N-acetyl-beta-D-glucosaminyl](n+1) + UDP + H(+). Functionally, polymerizes chitin, a structural polymer of the cell wall and septum, by transferring the sugar moiety of UDP-GlcNAc to the non-reducing end of the growing chitin polymer. Contributes to the production of conidia but is the only chitine synthase that does not contribute to the ability of fungal conidia to germinate. Involved in fungal stress tolerances. The chain is Chitin synthase VI from Metarhizium acridum (strain CQMa 102).